The primary structure comprises 176 residues: Disulfide bond formation protein B (176 aa).

At 1–14 (MLRFLNQCSHGRGA) the chain is on the cytoplasmic side. Residues 15–31 (WLLMAFTALALELTALW) traverse the membrane as a helical segment. The Periplasmic portion of the chain corresponds to 32-49 (FQHVMLLKPCVLCIYERC). A disulfide bridge connects residues cysteine 41 and cysteine 44. A helical transmembrane segment spans residues 50–65 (ALFGVLGAALIGAIAP). The Cytoplasmic segment spans residues 66–71 (KTPLRY). The helical transmembrane segment at 72 to 89 (VAMVIWLYSAFRGVQLTY) threads the bilayer. Residues 90-144 (EHTMLQLYPSPFATCDFMARFPEWLPLDKWVPQVFVASGDCAERQWEFLGLEMPQ) lie on the Periplasmic side of the membrane. Cysteine 104 and cysteine 130 are oxidised to a cystine. Residues 145–163 (WLLGIFIAYLIVAVLVVIS) traverse the membrane as a helical segment. The Cytoplasmic portion of the chain corresponds to 164-176 (QPFKAKKRDLFGR).

This sequence belongs to the DsbB family.

It localises to the cell inner membrane. In terms of biological role, required for disulfide bond formation in some periplasmic proteins. Acts by oxidizing the DsbA protein. The protein is Disulfide bond formation protein B of Escherichia coli O6:K15:H31 (strain 536 / UPEC).